The chain runs to 1156 residues: ATP-dependent RNA helicase glh-4 (1156 aa).

Disordered stretches follow at residues 1-81, 194-213, 231-423, and 436-522; these read MSFS…GAPS, TGVG…GQQP, SSSG…DSST, and HRAS…SGLG. Residues 12-22 are compositionally biased toward basic and acidic residues; the sequence is AEVKVAEDVPE. Pro residues predominate over residues 24–34; sequence NVPPPVEPPRA. Composition is skewed to polar residues over residues 60–73, 194–211, and 243–258; these read ITTS…TTPK, TGVG…SFGQ, and TESS…TSQP. Positions 259–281 are enriched in gly residues; the sequence is GFGGDSSTGFGSGLKAGFGGHGA. A compositionally biased stretch (polar residues) spans 307–319; that stretch reads ASSSNESAFGQQS. Composition is skewed to gly residues over residues 321–332 and 342–358; these read GFGGATKNGFGG and SKAG…GGQK. Polar residues-rich tracts occupy residues 362-371 and 395-406; these read TESSGFPTKE and PSTTDSSSGQQT. The segment covering 408 to 423 has biased composition (gly residues); that stretch reads GFGGASKPGFGGDSST. Composition is skewed to polar residues over residues 440–451 and 464–476; these read TAENSGLPTETT and ASSS…GQQS. Positions 478–489 are enriched in gly residues; the sequence is GFGGATKNGFGG. 5 CCHC-type zinc fingers span residues 570-587, 593-610, 616-633, 639-656, and 665-682; these read RGCH…ECDK, FPCR…DCDQ, GPCR…DCDQ, GPCR…DCQN, and EPCR…ECPT. The Q motif motif lies at 736–764; sequence SFDGFKILPQDLHDNLKRMKMNRPTPIQR. Residues 767 to 951 enclose the Helicase ATP-binding domain; it reads FFPIMHGNDV…LPKFVKEGYT (185 aa). 780-787 contributes to the ATP binding site; sequence AHTGSGKT. The DEAD box signature appears at 897-900; that stretch reads DEAD. Positions 986-1139 constitute a Helicase C-terminal domain; that stretch reads GIDENTVTLL…EVPEWLTEGA (154 aa). The segment at 1135-1156 is disordered; it reads LTEGAGHQEEGGDDWNEQEQEW. The span at 1145-1156 shows a compositional bias: acidic residues; that stretch reads GGDDWNEQEQEW.

Belongs to the DEAD box helicase family. DDX4/VASA subfamily. Interacts (via C-terminus) with kgb-1.

It carries out the reaction ATP + H2O = ADP + phosphate + H(+). In terms of biological role, probable ATP-binding RNA helicase. May act redundantly with the P-granule component glh-1 to regulate the formation of the granular structure of P-granules in embryos. May protect somatic cells from excessive apoptosis during normal development. This chain is ATP-dependent RNA helicase glh-4, found in Caenorhabditis elegans.